The sequence spans 273 residues: Ribosomal protein L11 methyltransferase (273 aa).

Residues Thr-112, Gly-133, Asp-155, and Asn-203 each contribute to the S-adenosyl-L-methionine site.

This sequence belongs to the methyltransferase superfamily. PrmA family.

Its subcellular location is the cytoplasm. It carries out the reaction L-lysyl-[protein] + 3 S-adenosyl-L-methionine = N(6),N(6),N(6)-trimethyl-L-lysyl-[protein] + 3 S-adenosyl-L-homocysteine + 3 H(+). Its function is as follows. Methylates ribosomal protein L11. In Deinococcus radiodurans (strain ATCC 13939 / DSM 20539 / JCM 16871 / CCUG 27074 / LMG 4051 / NBRC 15346 / NCIMB 9279 / VKM B-1422 / R1), this protein is Ribosomal protein L11 methyltransferase.